A 232-amino-acid chain; its full sequence is Ribonuclease 3 (232 aa).

In terms of domain architecture, RNase III spans 2-135; the sequence is IKALEDDLSQ…FIGALYLDQG (134 aa). Glutamate 48 is a Mg(2+) binding site. Aspartate 52 is an active-site residue. Mg(2+) contacts are provided by aspartate 121 and glutamate 124. Glutamate 124 is an active-site residue. The DRBM domain occupies 161–230; sequence DHKSELQELL…ANQALQLLRR (70 aa).

Belongs to the ribonuclease III family. Homodimer. It depends on Mg(2+) as a cofactor.

The protein localises to the cytoplasm. It catalyses the reaction Endonucleolytic cleavage to 5'-phosphomonoester.. In terms of biological role, digests double-stranded RNA. Involved in the processing of primary rRNA transcript to yield the immediate precursors to the large and small rRNAs (23S and 16S). Processes some mRNAs, and tRNAs when they are encoded in the rRNA operon. Processes pre-crRNA and tracrRNA of type II CRISPR loci if present in the organism. The protein is Ribonuclease 3 of Pediococcus pentosaceus (strain ATCC 25745 / CCUG 21536 / LMG 10740 / 183-1w).